The primary structure comprises 193 residues: Proteasome subunit beta 1 (193 aa).

Residues 1–4 (MPGA) constitute a propeptide, removed in mature form; by autocatalysis. Thr5 serves as the catalytic Nucleophile.

The protein belongs to the peptidase T1B family. In terms of assembly, the 20S proteasome core is composed of 14 alpha and 14 beta subunits that assemble into four stacked heptameric rings, resulting in a barrel-shaped structure. The two inner rings, each composed of seven catalytic beta subunits, are sandwiched by two outer rings, each composed of seven alpha subunits. The catalytic chamber with the active sites is on the inside of the barrel. Has a gated structure, the ends of the cylinder being occluded by the N-termini of the alpha-subunits. Is capped at one or both ends by the proteasome regulatory ATPase, PAN.

The protein resides in the cytoplasm. The enzyme catalyses Cleavage of peptide bonds with very broad specificity.. With respect to regulation, the formation of the proteasomal ATPase PAN-20S proteasome complex, via the docking of the C-termini of PAN into the intersubunit pockets in the alpha-rings, triggers opening of the gate for substrate entry. Interconversion between the open-gate and close-gate conformations leads to a dynamic regulation of the 20S proteasome proteolysis activity. In terms of biological role, component of the proteasome core, a large protease complex with broad specificity involved in protein degradation. This Cenarchaeum symbiosum (strain A) protein is Proteasome subunit beta 1.